A 353-amino-acid polypeptide reads, in one-letter code: S-adenosylmethionine:tRNA ribosyltransferase-isomerase (353 aa).

It belongs to the QueA family. As to quaternary structure, monomer.

It localises to the cytoplasm. It catalyses the reaction 7-aminomethyl-7-carbaguanosine(34) in tRNA + S-adenosyl-L-methionine = epoxyqueuosine(34) in tRNA + adenine + L-methionine + 2 H(+). It functions in the pathway tRNA modification; tRNA-queuosine biosynthesis. In terms of biological role, transfers and isomerizes the ribose moiety from AdoMet to the 7-aminomethyl group of 7-deazaguanine (preQ1-tRNA) to give epoxyqueuosine (oQ-tRNA). In Rickettsia bellii (strain RML369-C), this protein is S-adenosylmethionine:tRNA ribosyltransferase-isomerase.